We begin with the raw amino-acid sequence, 66 residues long: Large ribosomal subunit protein bL35 (66 aa).

The protein belongs to the bacterial ribosomal protein bL35 family.

In Synechococcus sp. (strain JA-2-3B'a(2-13)) (Cyanobacteria bacterium Yellowstone B-Prime), this protein is Large ribosomal subunit protein bL35.